We begin with the raw amino-acid sequence, 223 residues long: Small ribosomal subunit protein uS3 (223 aa).

Residues 39 to 115 (IRKYIEKNLA…RVFINIVEIK (77 aa)) enclose the KH type-2 domain.

Belongs to the universal ribosomal protein uS3 family. As to quaternary structure, part of the 30S ribosomal subunit. Forms a tight complex with proteins S10 and S14.

Functionally, binds the lower part of the 30S subunit head. Binds mRNA in the 70S ribosome, positioning it for translation. The protein is Small ribosomal subunit protein uS3 of Leuconostoc mesenteroides subsp. mesenteroides (strain ATCC 8293 / DSM 20343 / BCRC 11652 / CCM 1803 / JCM 6124 / NCDO 523 / NBRC 100496 / NCIMB 8023 / NCTC 12954 / NRRL B-1118 / 37Y).